Consider the following 511-residue polypeptide: Glucans biosynthesis protein G (511 aa).

The first 22 residues, 1–22 (MMKMRWLSAAVMLTLYTSSSWA), serve as a signal peptide directing secretion.

Belongs to the OpgD/OpgG family.

It is found in the periplasm. It participates in glycan metabolism; osmoregulated periplasmic glucan (OPG) biosynthesis. In terms of biological role, involved in the biosynthesis of osmoregulated periplasmic glucans (OPGs). In Escherichia coli (strain K12 / MC4100 / BW2952), this protein is Glucans biosynthesis protein G.